The chain runs to 352 residues: Phosphoribosylformylglycinamidine cyclo-ligase (352 aa).

Belongs to the AIR synthase family.

It is found in the cytoplasm. It catalyses the reaction 2-formamido-N(1)-(5-O-phospho-beta-D-ribosyl)acetamidine + ATP = 5-amino-1-(5-phospho-beta-D-ribosyl)imidazole + ADP + phosphate + H(+). Its pathway is purine metabolism; IMP biosynthesis via de novo pathway; 5-amino-1-(5-phospho-D-ribosyl)imidazole from N(2)-formyl-N(1)-(5-phospho-D-ribosyl)glycinamide: step 2/2. The polypeptide is Phosphoribosylformylglycinamidine cyclo-ligase (Nitrosospira multiformis (strain ATCC 25196 / NCIMB 11849 / C 71)).